A 355-amino-acid chain; its full sequence is Molybdenum import ATP-binding protein ModC (355 aa).

In terms of domain architecture, ABC transporter spans 1–233 (MTLIVEAKQR…PSTASDRREA (233 aa)). 31–38 (GRSGSGKT) is a binding site for ATP. The region spanning 291 to 355 (GLSALNILEA…AIIKTVALEA (65 aa)) is the Mop domain.

It belongs to the ABC transporter superfamily. Molybdate importer (TC 3.A.1.8) family. In terms of assembly, the complex is composed of two ATP-binding proteins (ModC), two transmembrane proteins (ModB) and a solute-binding protein (ModA).

It is found in the cell inner membrane. It carries out the reaction molybdate(out) + ATP + H2O = molybdate(in) + ADP + phosphate + H(+). Functionally, part of the ABC transporter complex ModABC involved in molybdenum import. Responsible for energy coupling to the transport system. The protein is Molybdenum import ATP-binding protein ModC of Rhizobium johnstonii (strain DSM 114642 / LMG 32736 / 3841) (Rhizobium leguminosarum bv. viciae).